The chain runs to 526 residues: ATP synthase subunit alpha (526 aa).

Residue 171–178 (GDRQTGKT) participates in ATP binding.

It belongs to the ATPase alpha/beta chains family. F-type ATPases have 2 components, CF(1) - the catalytic core - and CF(0) - the membrane proton channel. CF(1) has five subunits: alpha(3), beta(3), gamma(1), delta(1), epsilon(1). CF(0) has three main subunits: a(1), b(2) and c(9-12). The alpha and beta chains form an alternating ring which encloses part of the gamma chain. CF(1) is attached to CF(0) by a central stalk formed by the gamma and epsilon chains, while a peripheral stalk is formed by the delta and b chains.

The protein resides in the cell inner membrane. It carries out the reaction ATP + H2O + 4 H(+)(in) = ADP + phosphate + 5 H(+)(out). Its function is as follows. Produces ATP from ADP in the presence of a proton gradient across the membrane. The alpha chain is a regulatory subunit. The polypeptide is ATP synthase subunit alpha (Cytophaga hutchinsonii (strain ATCC 33406 / DSM 1761 / CIP 103989 / NBRC 15051 / NCIMB 9469 / D465)).